Consider the following 212-residue polypeptide: Ribosomal RNA small subunit methyltransferase G (212 aa).

S-adenosyl-L-methionine-binding positions include Gly-80, Leu-85, 131–132 (AE), and Arg-146.

It belongs to the methyltransferase superfamily. RNA methyltransferase RsmG family.

It localises to the cytoplasm. The enzyme catalyses guanosine(527) in 16S rRNA + S-adenosyl-L-methionine = N(7)-methylguanosine(527) in 16S rRNA + S-adenosyl-L-homocysteine. In terms of biological role, specifically methylates the N7 position of guanine in position 527 of 16S rRNA. This is Ribosomal RNA small subunit methyltransferase G from Xanthomonas axonopodis pv. citri (strain 306).